A 182-amino-acid polypeptide reads, in one-letter code: Crossover junction endodeoxyribonuclease RuvC (182 aa).

Residues aspartate 7, glutamate 67, and aspartate 139 contribute to the active site. Mg(2+) is bound by residues aspartate 7, glutamate 67, and aspartate 139.

This sequence belongs to the RuvC family. Homodimer which binds Holliday junction (HJ) DNA. The HJ becomes 2-fold symmetrical on binding to RuvC with unstacked arms; it has a different conformation from HJ DNA in complex with RuvA. In the full resolvosome a probable DNA-RuvA(4)-RuvB(12)-RuvC(2) complex forms which resolves the HJ. Mg(2+) serves as cofactor.

The protein localises to the cytoplasm. It catalyses the reaction Endonucleolytic cleavage at a junction such as a reciprocal single-stranded crossover between two homologous DNA duplexes (Holliday junction).. The RuvA-RuvB-RuvC complex processes Holliday junction (HJ) DNA during genetic recombination and DNA repair. Endonuclease that resolves HJ intermediates. Cleaves cruciform DNA by making single-stranded nicks across the HJ at symmetrical positions within the homologous arms, yielding a 5'-phosphate and a 3'-hydroxyl group; requires a central core of homology in the junction. The consensus cleavage sequence is 5'-(A/T)TT(C/G)-3'. Cleavage occurs on the 3'-side of the TT dinucleotide at the point of strand exchange. HJ branch migration catalyzed by RuvA-RuvB allows RuvC to scan DNA until it finds its consensus sequence, where it cleaves and resolves the cruciform DNA. This chain is Crossover junction endodeoxyribonuclease RuvC, found in Bordetella parapertussis (strain 12822 / ATCC BAA-587 / NCTC 13253).